Consider the following 118-residue polypeptide: Non-specific lipid-transfer protein A (118 aa).

Positions 1-25 (MAGVMKLACLVLACMIVAGPITANR) are cleaved as a signal peptide. Intrachain disulfides connect Cys29–Cys76, Cys39–Cys53, Cys54–Cys100, and Cys74–Cys114.

Belongs to the plant LTP family.

Plant non-specific lipid-transfer proteins transfer phospholipids as well as galactolipids across membranes. May play a role in wax or cutin deposition in the cell walls of expanding epidermal cells and certain secretory tissues. The sequence is that of Non-specific lipid-transfer protein A (WAX9A) from Brassica oleracea var. italica (Broccoli).